Here is a 548-residue protein sequence, read N- to C-terminus: Chaperonin GroEL (548 aa).

ATP contacts are provided by residues 30-33, Lys51, 87-91, Gly415, 479-481, and Asp495; these read TLGP, DGTTT, and NAA. Residues 526–548 are disordered; sequence KEDKSSDLGSAPAGGMGGMGGMM. Residues 537-548 show a composition bias toward gly residues; sequence PAGGMGGMGGMM.

The protein belongs to the chaperonin (HSP60) family. Forms a cylinder of 14 subunits composed of two heptameric rings stacked back-to-back. Interacts with the co-chaperonin GroES.

It is found in the cytoplasm. It catalyses the reaction ATP + H2O + a folded polypeptide = ADP + phosphate + an unfolded polypeptide.. In terms of biological role, together with its co-chaperonin GroES, plays an essential role in assisting protein folding. The GroEL-GroES system forms a nano-cage that allows encapsulation of the non-native substrate proteins and provides a physical environment optimized to promote and accelerate protein folding. The sequence is that of Chaperonin GroEL from Buchnera aphidicola subsp. Pterocomma populeum.